We begin with the raw amino-acid sequence, 98 residues long: Small ribosomal subunit protein eS24 (98 aa).

It belongs to the eukaryotic ribosomal protein eS24 family.

The polypeptide is Small ribosomal subunit protein eS24 (rps2e) (Thermoplasma acidophilum (strain ATCC 25905 / DSM 1728 / JCM 9062 / NBRC 15155 / AMRC-C165)).